Here is a 394-residue protein sequence, read N- to C-terminus: 1-deoxy-D-xylulose 5-phosphate reductoisomerase (394 aa).

6 residues coordinate NADPH: threonine 28, glycine 29, serine 30, isoleucine 31, asparagine 57, and asparagine 133. Residue lysine 134 participates in 1-deoxy-D-xylulose 5-phosphate binding. Glutamate 135 lines the NADPH pocket. Aspartate 157 contributes to the Mn(2+) binding site. 4 residues coordinate 1-deoxy-D-xylulose 5-phosphate: serine 158, glutamate 159, serine 183, and histidine 206. Glutamate 159 lines the Mn(2+) pocket. Glycine 212 contributes to the NADPH binding site. 1-deoxy-D-xylulose 5-phosphate-binding residues include serine 219, asparagine 224, lysine 225, and glutamate 228. Residue glutamate 228 participates in Mn(2+) binding.

Belongs to the DXR family. Requires Mg(2+) as cofactor. It depends on Mn(2+) as a cofactor.

The catalysed reaction is 2-C-methyl-D-erythritol 4-phosphate + NADP(+) = 1-deoxy-D-xylulose 5-phosphate + NADPH + H(+). It functions in the pathway isoprenoid biosynthesis; isopentenyl diphosphate biosynthesis via DXP pathway; isopentenyl diphosphate from 1-deoxy-D-xylulose 5-phosphate: step 1/6. Catalyzes the NADPH-dependent rearrangement and reduction of 1-deoxy-D-xylulose-5-phosphate (DXP) to 2-C-methyl-D-erythritol 4-phosphate (MEP). The sequence is that of 1-deoxy-D-xylulose 5-phosphate reductoisomerase from Nocardia farcinica (strain IFM 10152).